A 489-amino-acid chain; its full sequence is Dentin matrix acidic phosphoprotein 1 (489 aa).

The N-terminal stretch at 1–16 is a signal peptide; sequence MKTVILLTFLWGLSCA. The disordered stretch occupies residues 22–489; it reads YQNTESESSE…QDDNDCQDGY (468 aa). Residues 82–100 show a composition bias toward acidic residues; it reads DKEEDEDDSGDDTFGDEDN. The span at 123 to 138 shows a compositional bias: low complexity; it reads DTTQSSEDSTSQENSA. Composition is skewed to basic and acidic residues over residues 143-159 and 217-227; these read SDSKDHHSDEADSRPEA and RSEESKGDHEP. Polar residues predominate over residues 263–274; that stretch reads DSNSRETQSVST. The segment covering 275 to 287 has biased composition (basic and acidic residues); sequence EDFRSKEESRSET. Low complexity predominate over residues 316 to 332; it reads EPSQESSSESQEGVASE. The short motif at 334-336 is the Cell attachment site element; it reads RGD. The N-linked (GlcNAc...) asparagine glycan is linked to Asn340. Basic and acidic residues predominate over residues 346–358; sequence DQRDSESSEEDRL. The N-linked (GlcNAc...) asparagine glycan is linked to Asn378. The segment covering 386–397 has biased composition (acidic residues); it reads ESQESAQDEDSS. Positions 398 to 419 are enriched in low complexity; sequence SQEGLQSQSASRESRSQESQSE. The span at 420–442 shows a compositional bias: basic and acidic residues; that stretch reads QDSRSEENRDSDSQDSSRSKEES. N-linked (GlcNAc...) asparagine glycosylation occurs at Asn443. The segment covering 453–478 has biased composition (basic and acidic residues); that stretch reads EDNHPKNIEADNRKLIVDAYHNKPIG. Residues 479-489 show a composition bias toward acidic residues; the sequence is DQDDNDCQDGY.

Interacts with importin alpha. In terms of processing, phosphorylated in the cytosol and extracellular matrix and unphosphorylated in the nucleus. Phosphorylation is necessary for nucleocytoplasmic transport and may be catalyzed by a nuclear isoform of CK2 and can be augmented by calcium. Phosphorylated (in vitro) by FAM20C in the extracellular medium at sites within the S-x-E/pS motif. As to expression, expressed in tooth particularly in odontoblast and ameloblast.

It is found in the nucleus. It localises to the cytoplasm. The protein localises to the secreted. The protein resides in the extracellular space. Its subcellular location is the extracellular matrix. Functionally, may have a dual function during osteoblast differentiation. In the nucleus of undifferentiated osteoblasts, unphosphorylated form acts as a transcriptional component for activation of osteoblast-specific genes like osteocalcin. During the osteoblast to osteocyte transition phase it is phosphorylated and exported into the extracellular matrix, where it regulates nucleation of hydroxyapatite. This Rattus norvegicus (Rat) protein is Dentin matrix acidic phosphoprotein 1 (Dmp1).